The sequence spans 794 residues: FT-interacting protein 1 (794 aa).

Residues 1–27 show a composition bias toward basic and acidic residues; sequence MAAKDGAKSQEDYKLKDMKPELGERWP. The interval 1-34 is disordered; that stretch reads MAAKDGAKSQEDYKLKDMKPELGERWPHGGQRGG. 3 consecutive C2 domains span residues 37–158, 198–321, and 364–492; these read WIGS…PQWY, VQGE…SKWY, and YISD…THSY. Ca(2+)-binding residues include D76, D123, E125, and E131. The next 4 membrane-spanning stretches (helical) occupy residues 510–532, 595–615, 619–639, and 737–757; these read LAVRFTCLSLAHMIYLYGHPLLP, IVSVFAGLIAMSKWLGDVCYW, LTTILFHVLFFILICYPELIL, and LFVIFCLVAAMILYVTPFKII.

This sequence belongs to the MCTP family. Interacts with FT in phloem companion cells. Requires Ca(2+) as cofactor. As to expression, expressed in the vascular tissues of roots, cotyledons and rosette leaves. Specifically located in the phloem including companion cells. Observed in flowers. Not detected in the shoot apical meristem.

It localises to the endoplasmic reticulum membrane. Its subcellular location is the cell junction. The protein resides in the plasmodesma. Involved in the export of FT from the phloem companion cells to the sieve elements through the plasmodesmata. Regulates flowering time under long days. May function as a signaling molecule by regulating the trafficking of other regulators. This chain is FT-interacting protein 1, found in Arabidopsis thaliana (Mouse-ear cress).